We begin with the raw amino-acid sequence, 358 residues long: Glutamate 5-kinase (358 aa).

Lys-9 contacts ATP. Residues Ser-49, Asp-136, and Asn-148 each contribute to the substrate site. ATP-binding positions include 168-169 and 210-216; these read TD and TGGMTTK. A PUA domain is found at 275–353; it reads DAAVEVDAGA…RAEGVLIHRN (79 aa).

The protein belongs to the glutamate 5-kinase family.

It localises to the cytoplasm. It carries out the reaction L-glutamate + ATP = L-glutamyl 5-phosphate + ADP. It functions in the pathway amino-acid biosynthesis; L-proline biosynthesis; L-glutamate 5-semialdehyde from L-glutamate: step 1/2. In terms of biological role, catalyzes the transfer of a phosphate group to glutamate to form L-glutamate 5-phosphate. This chain is Glutamate 5-kinase, found in Streptococcus suis (strain 05ZYH33).